We begin with the raw amino-acid sequence, 297 residues long: Aspartate carbamoyltransferase catalytic subunit (297 aa).

Residues Arg51 and Thr52 each coordinate carbamoyl phosphate. Lys79 lines the L-aspartate pocket. 3 residues coordinate carbamoyl phosphate: Arg101, His129, and Gln132. Residues Arg162 and Arg216 each coordinate L-aspartate. Carbamoyl phosphate-binding residues include Gly257 and Pro258.

This sequence belongs to the aspartate/ornithine carbamoyltransferase superfamily. ATCase family. Heterododecamer (2C3:3R2) of six catalytic PyrB chains organized as two trimers (C3), and six regulatory PyrI chains organized as three dimers (R2).

The catalysed reaction is carbamoyl phosphate + L-aspartate = N-carbamoyl-L-aspartate + phosphate + H(+). The protein operates within pyrimidine metabolism; UMP biosynthesis via de novo pathway; (S)-dihydroorotate from bicarbonate: step 2/3. Its function is as follows. Catalyzes the condensation of carbamoyl phosphate and aspartate to form carbamoyl aspartate and inorganic phosphate, the committed step in the de novo pyrimidine nucleotide biosynthesis pathway. This is Aspartate carbamoyltransferase catalytic subunit from Myxococcus xanthus (strain DK1622).